The sequence spans 282 residues: MKTETTIQGLAASLNPARAARKIIGFVPTMGNLHEGHLTLVREAKKLCDVVVVSIFVNPTQFGPGEDFDNYPRTLEQDSRLLADVGCDIIFAPSVEQMYGTQPRLTNISVSQITDDLCGSSRPGHFDGVALVVTKLFNIVQPNYAFFGQKDYQQLAVIRQFVQDLNIPLEVIGVPIVRAEDGLALSSRNGYLTPEQRQVAPVIYQGLKQAEEQLHQGKDLQQVLADLKTLLTDNGFVVDYVEARQPNLLAASQFDRDIVLFVAAKLGGTRLIDNLQVAFTPQ.

30 to 37 contacts ATP; it reads MGNLHEGH. Catalysis depends on H37, which acts as the Proton donor. Position 61 (Q61) interacts with (R)-pantoate. Residue Q61 participates in beta-alanine binding. Position 148-151 (148-151) interacts with ATP; that stretch reads GQKD. Q154 contributes to the (R)-pantoate binding site. Residues V177 and 185–188 each bind ATP; that span reads LSSR.

It belongs to the pantothenate synthetase family. As to quaternary structure, homodimer.

It localises to the cytoplasm. It carries out the reaction (R)-pantoate + beta-alanine + ATP = (R)-pantothenate + AMP + diphosphate + H(+). It functions in the pathway cofactor biosynthesis; (R)-pantothenate biosynthesis; (R)-pantothenate from (R)-pantoate and beta-alanine: step 1/1. Catalyzes the condensation of pantoate with beta-alanine in an ATP-dependent reaction via a pantoyl-adenylate intermediate. The polypeptide is Pantothenate synthetase (Acinetobacter baumannii (strain AB0057)).